We begin with the raw amino-acid sequence, 679 residues long: MSRKMLVTCALPYANGAIHLGHMLEHIQADIWVRFQRMRGNEIYFVCADDAHGTPIMLNAAKQGITPEQLIEKAKADHVADFKGFNISFDNYHSTHSEENREITTEMYKKLRANGFIKSRVISQLFDPEKQMFLPDRFVKGTCPKCKAEDQYGDNCEVCASTYSPMDLINPRSAISGATPIVKESEHFFFDLPNFEGMLKEWTRSGSLQSEIANKMQEWFESGLQQWDISRDAPYFGFPIPDAENKFFYVWLDAPIGYMASFKNLCDRTGLNFDEFWKKDSETELYHFIGKDIVYFHSLFWPAMLDGCELRKPTNVFAHGYVTVDGVKMSKSRGTFIQASTYLKHIDPECLRYYYAAKLNERIEDLDLSLEDFVQRVNSDIVNKLVNLASRNASFIAKRFEGKLADKLEDEALFAEFIAQSEQIAAHYENREFNKAIRLIMDLCDKANKYVDDKAPWVIAKQEGCDAQLQAVCSMGIELFRVLMSYLKPVLPQLAERAEAFLQTELTWDNIQQPLLGQNVAPFKSLFSRLEKKQIDAVIEETKALFAAQNKEKGKQKVENTENTAVEPIAAEITIDDFAKLDLRVAKVISCEAVPESNKLLKFQLDLGDHQRQVLSGIKAAYNNPEELVGRFVIMVANLAPRKMKFGVSEGMILSAGTGGADLFLLSADEGIRPGMQVK.

The short motif at Pro12 to His22 is the 'HIGH' region element. 4 residues coordinate Zn(2+): Cys143, Cys146, Cys156, and Cys159. The 'KMSKS' region motif lies at Lys328–Ser332. An ATP-binding site is contributed by Lys331. One can recognise a tRNA-binding domain in the interval Asp577–Lys679.

It belongs to the class-I aminoacyl-tRNA synthetase family. MetG type 1 subfamily. Homodimer. Requires Zn(2+) as cofactor.

The protein localises to the cytoplasm. The enzyme catalyses tRNA(Met) + L-methionine + ATP = L-methionyl-tRNA(Met) + AMP + diphosphate. Is required not only for elongation of protein synthesis but also for the initiation of all mRNA translation through initiator tRNA(fMet) aminoacylation. In Actinobacillus pleuropneumoniae serotype 5b (strain L20), this protein is Methionine--tRNA ligase.